We begin with the raw amino-acid sequence, 59 residues long: Large ribosomal subunit protein bL32 (59 aa).

The interval 1-20 (MAVPRNRHSNARKNIRRSHH) is disordered.

It belongs to the bacterial ribosomal protein bL32 family.

The sequence is that of Large ribosomal subunit protein bL32 from Chlamydia trachomatis serovar A (strain ATCC VR-571B / DSM 19440 / HAR-13).